We begin with the raw amino-acid sequence, 428 residues long: 3-phosphoshikimate 1-carboxyvinyltransferase (428 aa).

3-phosphoshikimate-binding residues include Lys-23, Ser-24, and Arg-28. Position 23 (Lys-23) interacts with phosphoenolpyruvate. Residues Gly-97 and Arg-125 each coordinate phosphoenolpyruvate. Residues Ser-170, Ser-171, Gln-172, Ser-198, Asp-314, Asn-338, and Lys-342 each coordinate 3-phosphoshikimate. Gln-172 provides a ligand contact to phosphoenolpyruvate. Asp-314 (proton acceptor) is an active-site residue. Arg-346, Arg-388, and Lys-413 together coordinate phosphoenolpyruvate.

This sequence belongs to the EPSP synthase family. In terms of assembly, monomer.

It is found in the cytoplasm. The enzyme catalyses 3-phosphoshikimate + phosphoenolpyruvate = 5-O-(1-carboxyvinyl)-3-phosphoshikimate + phosphate. Its pathway is metabolic intermediate biosynthesis; chorismate biosynthesis; chorismate from D-erythrose 4-phosphate and phosphoenolpyruvate: step 6/7. Catalyzes the transfer of the enolpyruvyl moiety of phosphoenolpyruvate (PEP) to the 5-hydroxyl of shikimate-3-phosphate (S3P) to produce enolpyruvyl shikimate-3-phosphate and inorganic phosphate. In Baumannia cicadellinicola subsp. Homalodisca coagulata, this protein is 3-phosphoshikimate 1-carboxyvinyltransferase.